The chain runs to 261 residues: uncharacterized protein (261 aa).

Glutamate 46 is a catalytic residue.

It belongs to the PhzF family.

This is an uncharacterized protein from Pseudomonas aeruginosa (strain ATCC 15692 / DSM 22644 / CIP 104116 / JCM 14847 / LMG 12228 / 1C / PRS 101 / PAO1).